The following is a 105-amino-acid chain: Large ribosomal subunit protein bL21 (105 aa).

The protein belongs to the bacterial ribosomal protein bL21 family. As to quaternary structure, part of the 50S ribosomal subunit. Contacts protein L20.

In terms of biological role, this protein binds to 23S rRNA in the presence of protein L20. The sequence is that of Large ribosomal subunit protein bL21 from Rickettsia typhi (strain ATCC VR-144 / Wilmington).